The sequence spans 91 residues: Large ribosomal subunit protein bL27 (91 aa).

The tract at residues 1–24 (MAHKKGVGSSRNGRDSNPKMRGVK) is disordered.

Belongs to the bacterial ribosomal protein bL27 family.

This is Large ribosomal subunit protein bL27 from Chloroflexus aggregans (strain MD-66 / DSM 9485).